The following is a 137-amino-acid chain: MTYNRTIHFSDTDAAGVVYFAAFLSICHEAYENSLQVAGIDLKTFFTSSDIAIPIVHADIDFYQPLFCGDRIQINLTPTQLNETEFEIKYQVFNENNLDKLIAKATTKHVSINPKIRQRTSLSLSITQWLRSNQDDC.

Residue aspartate 13 is part of the active site.

Belongs to the 4-hydroxybenzoyl-CoA thioesterase family. DHNA-CoA hydrolase subfamily.

The catalysed reaction is 1,4-dihydroxy-2-naphthoyl-CoA + H2O = 1,4-dihydroxy-2-naphthoate + CoA + H(+). It participates in cofactor biosynthesis; phylloquinone biosynthesis. The protein operates within quinol/quinone metabolism; 1,4-dihydroxy-2-naphthoate biosynthesis; 1,4-dihydroxy-2-naphthoate from chorismate: step 7/7. In terms of biological role, catalyzes the hydrolysis of 1,4-dihydroxy-2-naphthoyl-CoA (DHNA-CoA) to 1,4-dihydroxy-2-naphthoate (DHNA), a reaction involved in phylloquinone (vitamin K1) biosynthesis. The polypeptide is 1,4-dihydroxy-2-naphthoyl-CoA hydrolase (Crocosphaera subtropica (strain ATCC 51142 / BH68) (Cyanothece sp. (strain ATCC 51142))).